Reading from the N-terminus, the 307-residue chain is MQYSTLAGQTDNSLVSNNFGFLRLPLNFMPYESHADWVITGVPYDMAVSGRSGARFGPEAIRRASVNLAWEHRRFPWTFDVRERLNIIDCGDLVFSFGDSRDFVEKMEAHAGKLLSSGKRCLSLGGDHFITLPLLRAHARYFGKLALIHFDAHTDTYDNGSEYDHGTMFYTAPKEGLIDPSRSVQIGIRTEHSKKLPFTVLTAPQVNEDSVEETVRKIKETVGNMPVYLTFDIDCLDPSFAPGTGTPVCGGLSSDRALKILRGLTDLDIVGMDVVEVAPSYDQSDITALAGATIALEMLYLQGAKKD.

Mn(2+)-binding residues include His128, Asp151, His153, Asp155, Asp232, and Asp234.

Belongs to the arginase family. Agmatinase subfamily. Requires Mn(2+) as cofactor.

It catalyses the reaction agmatine + H2O = urea + putrescine. The protein operates within amine and polyamine biosynthesis; putrescine biosynthesis via agmatine pathway; putrescine from agmatine: step 1/1. In terms of biological role, catalyzes the formation of putrescine from agmatine. The sequence is that of Agmatinase from Neisseria meningitidis serogroup C (strain 053442).